We begin with the raw amino-acid sequence, 719 residues long: uncharacterized protein (719 aa).

The stretch at 64–100 forms a coiled coil; that stretch reads IQNLNQRKEEVIRLIAEQDKLTDNLKRKIEQSVKLQE. Positions 649 to 718 constitute an S1 motif domain; the sequence is GMELQGTVRN…QKGRVSLSMV (70 aa).

This is an uncharacterized protein from Bacillus subtilis (strain 168).